The chain runs to 357 residues: Probable cinnamyl alcohol dehydrogenase (357 aa).

Cys-47 contacts Zn(2+). Ser-49 contacts NADP(+). Residues His-69, Glu-70, Cys-100, Cys-103, Cys-106, Cys-114, and Cys-163 each contribute to the Zn(2+) site. Residues Thr-167, 188-193 (GLGGVG), 211-216 (SSSDKK), Thr-251, Gly-275, and 298-300 (SFI) contribute to the NADP(+) site.

It belongs to the zinc-containing alcohol dehydrogenase family. Homodimer. Zn(2+) is required as a cofactor.

It catalyses the reaction (E)-cinnamyl alcohol + NADP(+) = (E)-cinnamaldehyde + NADPH + H(+). It carries out the reaction (E)-coniferol + NADP(+) = (E)-coniferaldehyde + NADPH + H(+). The catalysed reaction is (E)-sinapyl alcohol + NADP(+) = (E)-sinapaldehyde + NADPH + H(+). The enzyme catalyses (E)-4-coumaroyl alcohol + NADP(+) = (E)-4-coumaraldehyde + NADPH + H(+). It catalyses the reaction (E)-caffeyl alcohol + NADP(+) = (E)-caffeyl aldehyde + NADPH + H(+). The protein operates within aromatic compound metabolism; phenylpropanoid biosynthesis. In terms of biological role, involved in lignin biosynthesis. Catalyzes the final step specific for the production of lignin monomers. Catalyzes the NADPH-dependent reduction of coniferaldehyde, 5-hydroxyconiferaldehyde, sinapaldehyde, 4-coumaraldehyde and caffeyl aldehyde to their respective alcohols. This Pinus radiata (Monterey pine) protein is Probable cinnamyl alcohol dehydrogenase (CAD).